A 367-amino-acid polypeptide reads, in one-letter code: Mitogen-activated protein kinase 12 (367 aa).

The 285-residue stretch at 27–311 folds into the Protein kinase domain; sequence YQDLQPVGSG…AAEALTHPYF (285 aa). Residues 33 to 41 and Lys56 contribute to the ATP site; that span reads VGSGAYGAV. Asp153 functions as the Proton acceptor in the catalytic mechanism. Thr183 carries the post-translational modification Phosphothreonine. Positions 183–185 match the TXY motif; it reads TGY. Residue Tyr185 is modified to Phosphotyrosine.

This sequence belongs to the protein kinase superfamily. CMGC Ser/Thr protein kinase family. MAP kinase subfamily. In terms of assembly, monomer. Interacts with the PDZ domain of the syntrophin SNTA1. Interacts with SH3BP5, LIN7C, SCRIB and SYNJ2BP. Interacts with PTPN4; this interaction induces the activation of PTPN4 phosphatase activity. Mg(2+) is required as a cofactor. Post-translationally, dually phosphorylated on Thr-183 and Tyr-185 by MAP2K3/MKK3 and MAP2K6/MKK6, which activates the enzyme. Ubiquitinated. Ubiquitination leads to degradation by the proteasome pathway. In terms of tissue distribution, highly expressed in skeletal muscle. Also expressed in the heart, particularly in cardiac myocytes, lung, thymus and testes.

It localises to the cytoplasm. Its subcellular location is the nucleus. It is found in the mitochondrion. It catalyses the reaction L-seryl-[protein] + ATP = O-phospho-L-seryl-[protein] + ADP + H(+). The catalysed reaction is L-threonyl-[protein] + ATP = O-phospho-L-threonyl-[protein] + ADP + H(+). Its activity is regulated as follows. Activated by phosphorylation on threonine and tyrosine. MAP2K3/MKK3 and MAP2K6/MKK6 are both essential for the activation of MAPK12 induced by environmental stress, whereas MAP2K6/MKK6 is the major MAPK12 activator in response to TNF-alpha. Serine/threonine kinase which acts as an essential component of the MAP kinase signal transduction pathway. MAPK12 is one of the four p38 MAPKs which play an important role in the cascades of cellular responses evoked by extracellular stimuli such as pro-inflammatory cytokines or physical stress leading to direct activation of transcription factors such as ELK1 and ATF2. Accordingly, p38 MAPKs phosphorylate a broad range of proteins and it has been estimated that they may have approximately 200 to 300 substrates each. Some of the targets are downstream kinases such as MAPKAPK2, which are activated through phosphorylation and further phosphorylate additional targets. Plays a role in myoblast differentiation and also in the down-regulation of cyclin D1 in response to hypoxia in adrenal cells suggesting MAPK12 may inhibit cell proliferation while promoting differentiation. Phosphorylates DLG1. Following osmotic shock, MAPK12 in the cell nucleus increases its association with nuclear DLG1, thereby causing dissociation of DLG1-SFPQ complexes. This function is independent of its catalytic activity and could affect mRNA processing and/or gene transcription to aid cell adaptation to osmolarity changes in the environment. Regulates UV-induced checkpoint signaling and repair of UV-induced DNA damage and G2 arrest after gamma-radiation exposure. MAPK12 is involved in the regulation of SLC2A1 expression and basal glucose uptake in L6 myotubes; and negatively regulates SLC2A4 expression and contraction-mediated glucose uptake in adult skeletal muscle. C-Jun (JUN) phosphorylation is stimulated by MAPK14 and inhibited by MAPK12, leading to a distinct AP-1 regulation. MAPK12 is required for the normal kinetochore localization of PLK1, prevents chromosomal instability and supports mitotic cell viability. MAPK12-signaling is also positively regulating the expansion of transient amplifying myogenic precursor cells during muscle growth and regeneration. This is Mitogen-activated protein kinase 12 (Mapk12) from Mus musculus (Mouse).